The primary structure comprises 281 residues: MAMAKAGAPRVSAAQLVTLGLSLLCAVAGPAAAQNCGCQPNVCCSKFGYCGTTDEYCGDGCQSGPCRSGGGGSSGGGGANVASVVTGSFFNGIKSQAGSGCEGKNFYTRSAFLSAVKAYPGFAHGGSQVQGKREIAAFFAHATHETGHFCYISEINKSNAYCDPTKRQWPCAAGQKYYGRGPLQISWNYNYGPAGRAIGFDGLGDPGRVARDAVVAFKAALWFWMNSVHGVVPQGFGATTRAINGALECGGNNPAQMNARVGYYRQYCRQLGVDPGPNLTC.

Residues 1–33 form the signal peptide; that stretch reads MAMAKAGAPRVSAAQLVTLGLSLLCAVAGPAAA. A Chitin-binding type-1 domain is found at 34–68; sequence QNCGCQPNVCCSKFGYCGTTDEYCGDGCQSGPCRS. 4 disulfides stabilise this stretch: C36–C44, C38–C50, C43–C57, and C61–C66. Positions 69–78 are hinge region (Gly-rich); the sequence is GGGGSSGGGG. The tract at residues 79–281 is catalytic; sequence ANVASVVTGS…GVDPGPNLTC (203 aa). Residues C101 and C150 are joined by a disulfide bond. The Proton donor role is filled by E145. N-linked (GlcNAc...) asparagine glycosylation is present at N156. 2 cysteine pairs are disulfide-bonded: C162–C171 and C249–C281. N278 carries an N-linked (GlcNAc...) asparagine glycan.

This sequence belongs to the glycosyl hydrolase 19 family. Chitinase class I subfamily.

Its subcellular location is the secreted. The enzyme catalyses Random endo-hydrolysis of N-acetyl-beta-D-glucosaminide (1-&gt;4)-beta-linkages in chitin and chitodextrins.. Defense against chitin-containing fungal pathogens. Its action is countered by fungal polyglycine hydrolases, that cleaves within its hinge region (Gly-rich) to disrupt chitin-binding. The sequence is that of Endochitinase B from Zea mays (Maize).